A 208-amino-acid chain; its full sequence is Large ribosomal subunit protein bL25 (208 aa).

The interval 1-21 is disordered; the sequence is MSNEFSLNAEKRDVQGKGASR.

The protein belongs to the bacterial ribosomal protein bL25 family. CTC subfamily. In terms of assembly, part of the 50S ribosomal subunit; part of the 5S rRNA/L5/L18/L25 subcomplex. Contacts the 5S rRNA. Binds to the 5S rRNA independently of L5 and L18.

In terms of biological role, this is one of the proteins that binds to the 5S RNA in the ribosome where it forms part of the central protuberance. The chain is Large ribosomal subunit protein bL25 from Hahella chejuensis (strain KCTC 2396).